The following is a 141-amino-acid chain: Cystatin (141 aa).

The N-terminal stretch at 1–26 is a signal peptide; sequence MVHSQLPVAGPLRLLCALLLLPSATM. In terms of domain architecture, Cystatin spans 29–129; sequence GGLSPRSVTD…CRFQVWSRPW (101 aa). Positions 73 to 77 match the Secondary area of contact motif; it reads QVVSG. Disulfide bonds link Cys91-Cys107 and Cys120-Cys140.

Belongs to the cystatin family. Expressed at a low level by the venom gland (at protein level).

It localises to the secreted. Inhibits various C1 cysteine proteases including cathepsin L, papain and cathepsin B. This protein has no toxic activity and its function in the venom is unknown. It may play a role as a housekeeping or regulatory protein. The polypeptide is Cystatin (Pseudechis porphyriacus (Red-bellied black snake)).